A 944-amino-acid chain; its full sequence is Nonsense-mediated mRNA decay factor SMG8 (944 aa).

2 disordered regions span residues 560-597 and 628-653; these read NTGKSGAPQDEDAGEDEAEEEEGQERELPTKKKLQNTA and QASSEQLSNSEQNTTSSGTSSADTEN. Residues 568-583 are compositionally biased toward acidic residues; sequence QDEDAGEDEAEEEEGQ. The span at 628-650 shows a compositional bias: polar residues; the sequence is QASSEQLSNSEQNTTSSGTSSAD.

Belongs to the SMG8 family.

Functionally, involved in nonsense-mediated decay (NMD) of mRNAs containing premature stop codons. Probable component of kinase complex containing nonC and recruited to stalled ribosomes. The polypeptide is Nonsense-mediated mRNA decay factor SMG8 (Drosophila simulans (Fruit fly)).